The following is an 813-amino-acid chain: G-type lectin S-receptor-like serine/threonine-protein kinase LECRK1 (813 aa).

The first 19 residues, 1–19 (MVALLLFPMLLQLLSPTCA), serve as a signal peptide directing secretion. The Extracellular portion of the chain corresponds to 20-466 (QTQKNITLGS…NRKHWVLGSS (447 aa)). Positions 22-149 (QKNITLGSTL…DGTTKWQTFD (128 aa)) constitute a Bulb-type lectin domain. 6 N-linked (GlcNAc...) asparagine glycosylation sites follow: N24, N57, N164, N168, N219, and N242. Residues 293 to 346 (PQNICHAIVSDVGSGVCGFNSYCTFDGTRNQIASCQCPPWYKFFDEQKKYKGCK) form the EGF-like; atypical domain. 5 disulfide bridges follow: C297–C315, C309–C327, C329–C345, C391–C413, and C395–C401. The PAN domain maps to 354–433 (CDLDEATALA…NMADYVQRTV (80 aa)). N-linked (GlcNAc...) asparagine glycans are attached at residues N407 and N441. The helical transmembrane segment at 467–487 (LILGTSILVNFALISIFLFGT) threads the bilayer. At 488–813 (YCRIATKKNI…DPCSFISSLP (326 aa)) the chain is on the cytoplasmic side. Residues 523 to 797 (AGFHEILGAG…KVTQMLDGAV (275 aa)) form the Protein kinase domain. Residues 529-537 (LGAGASGVV) and K553 contribute to the ATP site. Catalysis depends on D647, which acts as the Proton acceptor.

It belongs to the protein kinase superfamily. Ser/Thr protein kinase family.

Its subcellular location is the membrane. It catalyses the reaction L-seryl-[protein] + ATP = O-phospho-L-seryl-[protein] + ADP + H(+). The catalysed reaction is L-threonyl-[protein] + ATP = O-phospho-L-threonyl-[protein] + ADP + H(+). Functionally, involved in innate immunity. Required for the expression of defense-related genes PR1A, LOX2 and CHS1 upon biotic stresses. Required for basal resistance to the fungal blast (M.grisea), bacterial blight (X.oryzae pv. oryzae, Xoo) and the herbivorous insect brown planthopper (N.lugens, BPH). May be involved in several defense signaling pathways. Involved in the promotion of seed germination. Required for the expression of alpha-amylase genes during seed germination. Involved in resistance against the herbivorous insect brown planthopper (N.lugens, BPH). Member of the BPH3 (BPH resistance locus 3) cluster which contains LECRK1, LECRK2 and LECRK3. This is G-type lectin S-receptor-like serine/threonine-protein kinase LECRK1 from Oryza sativa subsp. japonica (Rice).